The following is a 187-amino-acid chain: Protein GrpE (187 aa).

The segment covering 1-11 has biased composition (basic and acidic residues); the sequence is MTDSSNEHETE. The disordered stretch occupies residues 1-21; sequence MTDSSNEHETENPSLPIPDNE.

It belongs to the GrpE family. In terms of assembly, homodimer.

The protein resides in the cytoplasm. Functionally, participates actively in the response to hyperosmotic and heat shock by preventing the aggregation of stress-denatured proteins, in association with DnaK and GrpE. It is the nucleotide exchange factor for DnaK and may function as a thermosensor. Unfolded proteins bind initially to DnaJ; upon interaction with the DnaJ-bound protein, DnaK hydrolyzes its bound ATP, resulting in the formation of a stable complex. GrpE releases ADP from DnaK; ATP binding to DnaK triggers the release of the substrate protein, thus completing the reaction cycle. Several rounds of ATP-dependent interactions between DnaJ, DnaK and GrpE are required for fully efficient folding. In Chlamydia caviae (strain ATCC VR-813 / DSM 19441 / 03DC25 / GPIC) (Chlamydophila caviae), this protein is Protein GrpE.